The chain runs to 484 residues: Probable glycine dehydrogenase (decarboxylating) subunit 2 (484 aa).

Lysine 264 is subject to N6-(pyridoxal phosphate)lysine.

Belongs to the GcvP family. C-terminal subunit subfamily. In terms of assembly, the glycine cleavage system is composed of four proteins: P, T, L and H. In this organism, the P 'protein' is a heterodimer of two subunits. Pyridoxal 5'-phosphate is required as a cofactor.

It catalyses the reaction N(6)-[(R)-lipoyl]-L-lysyl-[glycine-cleavage complex H protein] + glycine + H(+) = N(6)-[(R)-S(8)-aminomethyldihydrolipoyl]-L-lysyl-[glycine-cleavage complex H protein] + CO2. Its function is as follows. The glycine cleavage system catalyzes the degradation of glycine. The P protein binds the alpha-amino group of glycine through its pyridoxal phosphate cofactor; CO(2) is released and the remaining methylamine moiety is then transferred to the lipoamide cofactor of the H protein. In Legionella pneumophila subsp. pneumophila (strain Philadelphia 1 / ATCC 33152 / DSM 7513), this protein is Probable glycine dehydrogenase (decarboxylating) subunit 2.